The sequence spans 262 residues: ATP synthase subunit a (262 aa).

Transmembrane regions (helical) follow at residues valine 26–serine 46, valine 86–isoleucine 106, aspartate 130–isoleucine 150, leucine 204–leucine 226, and leucine 240–alanine 260.

This sequence belongs to the ATPase A chain family. As to quaternary structure, F-type ATPases have 2 components, CF(1) - the catalytic core - and CF(0) - the membrane proton channel. CF(1) has five subunits: alpha(3), beta(3), gamma(1), delta(1), epsilon(1). CF(0) has three main subunits: a(1), b(2) and c(9-12). The alpha and beta chains form an alternating ring which encloses part of the gamma chain. CF(1) is attached to CF(0) by a central stalk formed by the gamma and epsilon chains, while a peripheral stalk is formed by the delta and b chains.

Its subcellular location is the cell inner membrane. Functionally, key component of the proton channel; it plays a direct role in the translocation of protons across the membrane. This Haemophilus influenzae (strain 86-028NP) protein is ATP synthase subunit a.